We begin with the raw amino-acid sequence, 368 residues long: F-box only protein 28 (368 aa).

Residues 1–11 (MAAASEERMAE) are compositionally biased toward basic and acidic residues. Residues 1-56 (MAAASEERMAEEGGGGHGDGGSCSAAGSAQRQPPAPPSQAPPPGSQAPAAPALAPD) form a disordered region. The span at 12-21 (EGGGGHGDGG) shows a compositional bias: gly residues. Low complexity predominate over residues 22 to 32 (SCSAAGSAQRQ). Residues 33–45 (PPAPPSQAPPPGS) are compositionally biased toward pro residues. The span at 46–55 (QAPAAPALAP) shows a compositional bias: low complexity. The region spanning 61–109 (NNTLVALPIVAIENILSFMSYDEISQLRLVCKRMDLVCQRMLNQGFLKV) is the F-box domain. 2 positions are modified to phosphoserine: Ser-235 and Ser-242. Thr-270 carries the post-translational modification Phosphothreonine. A disordered region spans residues 328–368 (MESAVGTSSGSGQSEESPRKRRKATEAIDSLRKSKRLRNRK). Ser-344 is subject to Phosphoserine.

In terms of assembly, part of a SCF (SKP1-cullin-F-box) protein ligase complex.

The protein localises to the chromosome. Its subcellular location is the centromere. It localises to the kinetochore. Functionally, probably recognizes and binds to some phosphorylated proteins and promotes their ubiquitination and degradation. In Mus musculus (Mouse), this protein is F-box only protein 28 (Fbxo28).